A 227-amino-acid chain; its full sequence is Cytidylate kinase (227 aa).

12–20 (GPGGAGKGT) contacts ATP.

The protein belongs to the cytidylate kinase family. Type 1 subfamily.

The protein localises to the cytoplasm. The enzyme catalyses CMP + ATP = CDP + ADP. The catalysed reaction is dCMP + ATP = dCDP + ADP. The protein is Cytidylate kinase of Klebsiella pneumoniae (strain 342).